Reading from the N-terminus, the 515-residue chain is Protein NRT1/ PTR FAMILY 4.1 (515 aa).

Helical transmembrane passes span 24–44 (GIKAAFIACVVETMENMVFLA), 71–91 (FVGTSFLLTIFGGFVADSFLT), 93–113 (FAAFVLFGSIELLGLIMLTLQ), 134–154 (VLFTGLYAIAIGVGGVKGSLP), 168–188 (LISGFFNWYFFSVCLGGFLAV), 204–224 (FTISTAVLASAIFVFVAGCPM), 298–318 (FLALLPIFGSTIIMNCCVAQM), 339–359 (IPVASLNAIPLLCMLSSLALY), 381–401 (IGYGLALTSISMAVAAIVEVK), 413–433 (ISVFWLELQFVMLSLSDMLTV), 461–481 (AMGFFLSSVLVEVVNGITGWL), and 492–512 (LFYLVLCVLNTLNLFNYIFWA).

Belongs to the major facilitator superfamily. Proton-dependent oligopeptide transporter (POT/PTR) (TC 2.A.17) family. As to expression, expressed in siliques and flowers.

The protein localises to the membrane. Functionally, involved in (+) and (-)-abscisic acid transport (ABA) and in gibberellin import. The sequence is that of Protein NRT1/ PTR FAMILY 4.1 (NPF4.1) from Arabidopsis thaliana (Mouse-ear cress).